A 264-amino-acid chain; its full sequence is UPF0162 protein PM0557 (264 aa).

This sequence belongs to the UPF0162 family.

In Pasteurella multocida (strain Pm70), this protein is UPF0162 protein PM0557.